The chain runs to 205 residues: Holliday junction branch migration complex subunit RuvA (205 aa).

Positions 1 to 62 are domain I; that stretch reads MFEYVTGYVE…EDIMALYGFK (62 aa). The segment at 63–141 is domain II; that stretch reads TREERLLFTK…DVVPDAFVDL (79 aa). Residues 142–152 are flexible linker; that stretch reads FSDTERFDEKK. Positions 153–205 are domain III; the sequence is GTSAELDEALEALRALGYAEREVSRVVPELLKESLTTDQYIKKALSLLLNGKR.

It belongs to the RuvA family. In terms of assembly, homotetramer. Forms an RuvA(8)-RuvB(12)-Holliday junction (HJ) complex. HJ DNA is sandwiched between 2 RuvA tetramers; dsDNA enters through RuvA and exits via RuvB. An RuvB hexamer assembles on each DNA strand where it exits the tetramer. Each RuvB hexamer is contacted by two RuvA subunits (via domain III) on 2 adjacent RuvB subunits; this complex drives branch migration. In the full resolvosome a probable DNA-RuvA(4)-RuvB(12)-RuvC(2) complex forms which resolves the HJ.

The protein localises to the cytoplasm. Its function is as follows. The RuvA-RuvB-RuvC complex processes Holliday junction (HJ) DNA during genetic recombination and DNA repair, while the RuvA-RuvB complex plays an important role in the rescue of blocked DNA replication forks via replication fork reversal (RFR). RuvA specifically binds to HJ cruciform DNA, conferring on it an open structure. The RuvB hexamer acts as an ATP-dependent pump, pulling dsDNA into and through the RuvAB complex. HJ branch migration allows RuvC to scan DNA until it finds its consensus sequence, where it cleaves and resolves the cruciform DNA. The chain is Holliday junction branch migration complex subunit RuvA from Bacillus cereus (strain G9842).